Here is a 727-residue protein sequence, read N- to C-terminus: Catalase-peroxidase (727 aa).

Positions 1–26 are disordered; the sequence is MSDEKKCPVTGRTSSQVAGSGTSNKD. Positions 11–26 are enriched in polar residues; that stretch reads GRTSSQVAGSGTSNKD. Positions 96–219 form a cross-link, tryptophyl-tyrosyl-methioninium (Trp-Tyr) (with M-245); sequence WHSAGTYRIG…LAAVQMGLIY (124 aa). His-97 serves as the catalytic Proton acceptor. Residues 219–245 constitute a cross-link (tryptophyl-tyrosyl-methioninium (Tyr-Met) (with W-96)); the sequence is YVNPEGPNGDPNAVASGKDVRETFARM. Residue His-260 participates in heme b binding. A compositionally biased stretch (basic and acidic residues) spans 346 to 362; the sequence is SDPEAKKAVPDAHDPSK. The tract at residues 346 to 365 is disordered; the sequence is SDPEAKKAVPDAHDPSKTHP.

This sequence belongs to the peroxidase family. Peroxidase/catalase subfamily. Homodimer or homotetramer. It depends on heme b as a cofactor. In terms of processing, formation of the three residue Trp-Tyr-Met cross-link is important for the catalase, but not the peroxidase activity of the enzyme.

It catalyses the reaction H2O2 + AH2 = A + 2 H2O. The enzyme catalyses 2 H2O2 = O2 + 2 H2O. Its function is as follows. Bifunctional enzyme with both catalase and broad-spectrum peroxidase activity. The chain is Catalase-peroxidase from Maridesulfovibrio salexigens (strain ATCC 14822 / DSM 2638 / NCIMB 8403 / VKM B-1763) (Desulfovibrio salexigens).